The sequence spans 678 residues: Beta-catenin-like protein hmp-2 (678 aa).

ARM repeat units follow at residues 153–192, 280–319, 320–359, 362–403, and 409–448; these read RGGP…NLLM, PSNK…RNLS, DSAT…NLTC, TRNK…HCTA, and EEAQ…NSAL.

This sequence belongs to the beta-catenin family. In terms of assembly, component of a core catenin-cadherin complex consisting of hmr-1, hmp-1 and hmp-2; the complex localizes to adherens junctions. Interacts with hmr-1; the interaction is direct. May interact with hmp-1. Interacts with frk-1. Epidermal cells.

Its subcellular location is the cell junction. It localises to the adherens junction. Its function is as follows. Required for cell migration during body enclosure and cell shape changes during body elongation. Plays a role in recruitment of the cadherin protein hmr-1 to adherens junctions. This chain is Beta-catenin-like protein hmp-2 (hmp-2), found in Caenorhabditis elegans.